Reading from the N-terminus, the 408-residue chain is Glucose-1-phosphate adenylyltransferase (408 aa).

Alpha-D-glucose 1-phosphate contacts are provided by residues tyrosine 100, glycine 165, 180-181 (EK), and serine 198.

The protein belongs to the bacterial/plant glucose-1-phosphate adenylyltransferase family. Homotetramer.

The catalysed reaction is alpha-D-glucose 1-phosphate + ATP + H(+) = ADP-alpha-D-glucose + diphosphate. It participates in glycan biosynthesis; glycogen biosynthesis. In terms of biological role, involved in the biosynthesis of ADP-glucose, a building block required for the elongation reactions to produce glycogen. Catalyzes the reaction between ATP and alpha-D-glucose 1-phosphate (G1P) to produce pyrophosphate and ADP-Glc. This Cutibacterium acnes (strain DSM 16379 / KPA171202) (Propionibacterium acnes) protein is Glucose-1-phosphate adenylyltransferase.